The chain runs to 195 residues: Small ribosomal subunit protein uS5 (195 aa).

In terms of domain architecture, S5 DRBM spans 22–85; it reads IVEKLVHINR…EEAKKSMIRV (64 aa). Residues 164–195 form a disordered region; it reads QVAAKRGKKVSDVIGRRADGASAAQPAADAEG. Basic and acidic residues predominate over residues 172–182; the sequence is KVSDVIGRRAD. The segment covering 183 to 195 has biased composition (low complexity); sequence GASAAQPAADAEG.

Belongs to the universal ribosomal protein uS5 family. Part of the 30S ribosomal subunit. Contacts proteins S4 and S8.

In terms of biological role, with S4 and S12 plays an important role in translational accuracy. Located at the back of the 30S subunit body where it stabilizes the conformation of the head with respect to the body. In Phenylobacterium zucineum (strain HLK1), this protein is Small ribosomal subunit protein uS5.